A 116-amino-acid chain; its full sequence is Mercuric transport protein MerT (116 aa).

Helical transmembrane passes span 16-36 and 46-66; these read LAAI…ALGF and VLEP…FFAW. Positions 24 and 25 each coordinate Hg(2+). Residues Cys-76 and Cys-82 each contribute to the Hg(2+) site. Residues 94–114 form a helical membrane-spanning segment; sequence IFWFVAVLVLVALGFPYVMPF.

Belongs to the MerT family.

Its subcellular location is the cell inner membrane. Its function is as follows. Involved in mercury resistance. Probably transfers a mercuric ion from the periplasmic Hg(2+)-binding protein MerP to the cytoplasmic mercuric reductase MerA. This is Mercuric transport protein MerT from Acinetobacter calcoaceticus.